A 572-amino-acid polypeptide reads, in one-letter code: Phospholipase B-like protein B (572 aa).

The N-terminal stretch at 1–28 is a signal peptide; that stretch reads MNKLKSNFILNIVILFTILIFNINFINC. N-linked (GlcNAc...) asparagine glycosylation is found at N73, N138, N219, N427, N544, and N564.

This sequence belongs to the phospholipase B-like family.

It localises to the secreted. In terms of biological role, probable phospholipase. The polypeptide is Phospholipase B-like protein B (plbB) (Dictyostelium discoideum (Social amoeba)).